Here is a 163-residue protein sequence, read N- to C-terminus: Ribosome maturation factor RimM (163 aa).

Residues 92–161 (PGEYYHHDLI…AETVTVNAAF (70 aa)) enclose the PRC barrel domain.

It belongs to the RimM family. Binds ribosomal protein uS19.

The protein resides in the cytoplasm. In terms of biological role, an accessory protein needed during the final step in the assembly of 30S ribosomal subunit, possibly for assembly of the head region. Essential for efficient processing of 16S rRNA. May be needed both before and after RbfA during the maturation of 16S rRNA. It has affinity for free ribosomal 30S subunits but not for 70S ribosomes. In Sphingopyxis alaskensis (strain DSM 13593 / LMG 18877 / RB2256) (Sphingomonas alaskensis), this protein is Ribosome maturation factor RimM.